We begin with the raw amino-acid sequence, 507 residues long: Archaeal-type glutamate synthase [NADPH] (507 aa).

4Fe-4S ferredoxin-type domains are found at residues 10 to 39 (FVVE…YDEN) and 41 to 70 (NRVY…VRKN). 8 residues coordinate [4Fe-4S] cluster: cysteine 19, cysteine 22, cysteine 25, cysteine 29, cysteine 50, cysteine 53, cysteine 56, and cysteine 60.

Belongs to the glutamate synthase family. FMN is required as a cofactor.

It catalyses the reaction 2 L-glutamate + NADP(+) = L-glutamine + 2-oxoglutarate + NADPH + H(+). The protein is Archaeal-type glutamate synthase [NADPH] of Thermotoga maritima (strain ATCC 43589 / DSM 3109 / JCM 10099 / NBRC 100826 / MSB8).